Here is a 237-residue protein sequence, read N- to C-terminus: Protein GrpE (237 aa).

2 disordered regions span residues 1 to 52 and 200 to 237; these read MSGD…RLQQ and KVSM…EPGV. Residues 27 to 40 show a composition bias toward polar residues; the sequence is ASMNSDEGQPSAQS. Low complexity predominate over residues 204–218; it reads GPGPQSGASPSSAQS.

This sequence belongs to the GrpE family. Homodimer.

It localises to the cytoplasm. Functionally, participates actively in the response to hyperosmotic and heat shock by preventing the aggregation of stress-denatured proteins, in association with DnaK and GrpE. It is the nucleotide exchange factor for DnaK and may function as a thermosensor. Unfolded proteins bind initially to DnaJ; upon interaction with the DnaJ-bound protein, DnaK hydrolyzes its bound ATP, resulting in the formation of a stable complex. GrpE releases ADP from DnaK; ATP binding to DnaK triggers the release of the substrate protein, thus completing the reaction cycle. Several rounds of ATP-dependent interactions between DnaJ, DnaK and GrpE are required for fully efficient folding. This Prochlorococcus marinus (strain MIT 9303) protein is Protein GrpE.